The primary structure comprises 183 residues: MTVQQPKRRPLSRYLKDFKHSQTHCAHCHKLLDRITLVRRGKIVNKIAISQLDMLLDDAAWQREQKEWVALCRFCGDLHCKKQSDFFDIIGFKQYLFEQTEMSHGTVREYVVRLRRLGNYLSEQNISHDLLQDGFLDESLAPWLPETSTNNYRIALRKYQQYKAHQQIAPRQKSPFTASSDIY.

Functionally, may regulate sigma factor activity. This Salmonella typhi protein is Protein FliZ (fliZ).